A 249-amino-acid chain; its full sequence is Uridylate kinase (249 aa).

Residue 22 to 25 (KISG) participates in ATP binding. The involved in allosteric activation by GTP stretch occupies residues 30–35 (GTQGFG). A UMP-binding site is contributed by glycine 64. Residues glycine 65 and arginine 69 each contribute to the ATP site. Residues aspartate 84 and 145 to 152 (TGNPYFTT) contribute to the UMP site. 3 residues coordinate ATP: asparagine 173, tyrosine 179, and aspartate 182.

It belongs to the UMP kinase family. As to quaternary structure, homohexamer.

It is found in the cytoplasm. It carries out the reaction UMP + ATP = UDP + ADP. It participates in pyrimidine metabolism; CTP biosynthesis via de novo pathway; UDP from UMP (UMPK route): step 1/1. Its activity is regulated as follows. Allosterically activated by GTP. Inhibited by UTP. Catalyzes the reversible phosphorylation of UMP to UDP. The chain is Uridylate kinase from Ruegeria sp. (strain TM1040) (Silicibacter sp.).